We begin with the raw amino-acid sequence, 218 residues long: Ribosomal RNA small subunit methyltransferase G (218 aa).

S-adenosyl-L-methionine-binding positions include glycine 82, leucine 87, 133 to 134 (VE), and arginine 147.

Belongs to the methyltransferase superfamily. RNA methyltransferase RsmG family.

Its subcellular location is the cytoplasm. It catalyses the reaction guanosine(527) in 16S rRNA + S-adenosyl-L-methionine = N(7)-methylguanosine(527) in 16S rRNA + S-adenosyl-L-homocysteine. Specifically methylates the N7 position of guanine in position 527 of 16S rRNA. The protein is Ribosomal RNA small subunit methyltransferase G of Leptothrix cholodnii (strain ATCC 51168 / LMG 8142 / SP-6) (Leptothrix discophora (strain SP-6)).